A 460-amino-acid chain; its full sequence is Dihydroorotate dehydrogenase (quinone), mitochondrial (460 aa).

A mitochondrion-targeting transit peptide spans 1–32; it reads MAGRAATSSAKWAREFLFRRVSSNPLGATRNC. A helical membrane pass occupies residues 53–69; that stretch reads ILTGATIGLAIAGGAYV. Residues 141 to 145 and serine 165 contribute to the FMN site; that span reads AGFDK. Residue lysine 145 coordinates substrate. 190–194 contacts substrate; that stretch reads NRCGF. Residues 213–245 are disordered; sequence RMLAETSATSSSPSDDVKPGGKSGPGILGVNLG. FMN-binding residues include asparagine 243 and asparagine 274. Residue 274–279 participates in substrate binding; the sequence is NVSSPN. Serine 277 acts as the Nucleophile in catalysis. FMN is bound by residues lysine 319 and serine 347. 348 to 349 contributes to the substrate binding site; that stretch reads NT. FMN is bound by residues glycine 371, glycine 400, and 421 to 422; that span reads YT.

Belongs to the dihydroorotate dehydrogenase family. Type 2 subfamily. FMN serves as cofactor.

It localises to the mitochondrion inner membrane. It catalyses the reaction (S)-dihydroorotate + a quinone = orotate + a quinol. It functions in the pathway pyrimidine metabolism; UMP biosynthesis via de novo pathway; orotate from (S)-dihydroorotate (quinone route): step 1/1. In terms of biological role, catalyzes the conversion of dihydroorotate to orotate with quinone as electron acceptor. This Arabidopsis thaliana (Mouse-ear cress) protein is Dihydroorotate dehydrogenase (quinone), mitochondrial (PYRD).